The following is a 394-amino-acid chain: A-type flagellin (394 aa).

It belongs to the bacterial flagellin family. Phosphorylated on tyrosine residue(s). In terms of processing, flagellin from strain 5939 but not from strain 170018 is glycosylated.

Its subcellular location is the secreted. It is found in the bacterial flagellum. In terms of biological role, flagellin is the subunit protein which polymerizes to form the filaments of bacterial flagella. In Pseudomonas aeruginosa, this protein is A-type flagellin (fliC).